The chain runs to 88 residues: Small ribosomal subunit protein bS16c (88 aa).

The protein belongs to the bacterial ribosomal protein bS16 family.

It localises to the plastid. It is found in the chloroplast. This chain is Small ribosomal subunit protein bS16c, found in Citrus sinensis (Sweet orange).